Reading from the N-terminus, the 115-residue chain is U17-barytoxin-Tl1c (115 aa).

The N-terminal stretch at 1 to 20 (MKTIIVFLSLLVLATKFGDA) is a signal peptide. Positions 21–74 (KEGVNQKQKKEVTQNEFREEYLNEMAAMSLVQQLEAIERALFENEAGRNSRQKR) are excised as a propeptide. 3 cysteine pairs are disulfide-bonded: cysteine 75–cysteine 89, cysteine 82–cysteine 94, and cysteine 88–cysteine 109.

The protein belongs to the neurotoxin 14 (magi-1) family. 03 (ICK-30-40) subfamily. Expressed by the venom gland.

Its subcellular location is the secreted. Ion channel inhibitor. This chain is U17-barytoxin-Tl1c, found in Trittame loki (Brush-footed trapdoor spider).